The sequence spans 202 residues: Nitrophorin-3 (202 aa).

The first 23 residues, methionine 1 to glycine 23, serve as a signal peptide directing secretion. 2 disulfides stabilise this stretch: cysteine 25–cysteine 144 and cysteine 62–cysteine 193. Position 80 (histidine 80) interacts with heme.

Belongs to the calycin superfamily. Nitrophorin family. Interacts weakly with host coagulation factor IX (F9) (inactive and activated) in the presence of Ca(2+). In terms of tissue distribution, salivary gland (at protein level).

The protein localises to the secreted. Heme-based protein that deliver nitric oxide gas (NO) to the victim while feeding, resulting in vasodilation and inhibition of platelet aggregation. Reversibly binds nitric oxide (NO). Also binds tightly to histamine, which is released by the host to induce wound healing. Exhibits weak anticoagulant activity. This chain is Nitrophorin-3, found in Rhodnius prolixus (Triatomid bug).